Reading from the N-terminus, the 212-residue chain is Ribonuclease HII (212 aa).

Residues 1–206 (MARFGVDEAG…SRDALGAAEQ (206 aa)) enclose the RNase H type-2 domain. D7, E8, and D100 together coordinate a divalent metal cation.

It belongs to the RNase HII family. Mn(2+) is required as a cofactor. It depends on Mg(2+) as a cofactor.

The protein resides in the cytoplasm. The enzyme catalyses Endonucleolytic cleavage to 5'-phosphomonoester.. In terms of biological role, endonuclease that specifically degrades the RNA of RNA-DNA hybrids. The chain is Ribonuclease HII from Halobacterium salinarum (strain ATCC 29341 / DSM 671 / R1).